A 500-amino-acid chain; its full sequence is Probable 26S proteasome non-ATPase regulatory subunit 3 (500 aa).

The PCI domain occupies Ala253–Asp432. The interval Arg462–Gln484 is disordered. Positions Tyr468–Gln484 are enriched in basic and acidic residues.

Belongs to the proteasome subunit S3 family. In terms of assembly, the 26S proteasome is composed of a core protease, known as the 20S proteasome, capped at one or both ends by the 19S regulatory complex (RC). The RC is composed of at least 18 different subunits in two subcomplexes, the base and the lid, which form the portions proximal and distal to the 20S proteolytic core, respectively.

In terms of biological role, acts as a regulatory subunit of the 26 proteasome which is involved in the ATP-dependent degradation of ubiquitinated proteins. This is Probable 26S proteasome non-ATPase regulatory subunit 3 (DOXA2) from Anopheles stephensi (Indo-Pakistan malaria mosquito).